Consider the following 139-residue polypeptide: Large ribosomal subunit protein uL16 (139 aa).

It belongs to the universal ribosomal protein uL16 family. In terms of assembly, part of the 50S ribosomal subunit.

Its function is as follows. Binds 23S rRNA and is also seen to make contacts with the A and possibly P site tRNAs. This Chlorobium phaeobacteroides (strain BS1) protein is Large ribosomal subunit protein uL16.